The primary structure comprises 445 residues: Exodeoxyribonuclease 7 large subunit (445 aa).

Belongs to the XseA family. In terms of assembly, heterooligomer composed of large and small subunits.

It localises to the cytoplasm. The catalysed reaction is Exonucleolytic cleavage in either 5'- to 3'- or 3'- to 5'-direction to yield nucleoside 5'-phosphates.. Bidirectionally degrades single-stranded DNA into large acid-insoluble oligonucleotides, which are then degraded further into small acid-soluble oligonucleotides. The polypeptide is Exodeoxyribonuclease 7 large subunit (Staphylococcus aureus (strain JH1)).